The chain runs to 31 residues: PTEN upstream open reading frame MP31 (31 aa).

As to quaternary structure, interacts with lactate dehydrogenases LDHA and LDHB; interaction with mitochondrial LDH leads to inhibition of lactate dehydrogenase activity, preventing conversion of lactate to pyruvate. In terms of tissue distribution, expressed in brain (at protein level). Expressed at lower levels in glioblastomas than in normal brain tissue (at protein level).

Its subcellular location is the mitochondrion. Functionally, inhibits lactate dehydrogenase (LDH)-mediated conversion of lactate to pyruvate in mitochondria by competing with mitochondrial LDH for binding to NAD(+). Also inhibits cellular lactate utilization. The polypeptide is PTEN upstream open reading frame MP31 (Homo sapiens (Human)).